The following is a 247-amino-acid chain: Caffeoyl-CoA O-methyltransferase 2 (247 aa).

Substrate is bound at residue lysine 21. S-adenosyl-L-methionine contacts are provided by residues threonine 63, glutamate 85, 87-88 (GV), serine 93, aspartate 111, and alanine 140. Substrate is bound at residue aspartate 163. Aspartate 163 contributes to the a divalent metal cation binding site. Aspartate 165 provides a ligand contact to S-adenosyl-L-methionine. Residues aspartate 189 and asparagine 190 each coordinate a divalent metal cation. Asparagine 194 serves as a coordination point for substrate.

The protein belongs to the class I-like SAM-binding methyltransferase superfamily. Cation-dependent O-methyltransferase family. CCoAMT subfamily. Requires a divalent metal cation as cofactor.

It catalyses the reaction (E)-caffeoyl-CoA + S-adenosyl-L-methionine = (E)-feruloyl-CoA + S-adenosyl-L-homocysteine + H(+). The protein operates within aromatic compound metabolism; phenylpropanoid biosynthesis. Methylates caffeoyl-CoA to feruloyl-CoA and 5-hydroxyferuloyl-CoA to sinapoyl-CoA. Plays a role in the synthesis of feruloylated polysaccharides. Involved in the reinforcement of the plant cell wall. Also involved in the responding to wounding or pathogen challenge by the increased formation of cell wall-bound ferulic acid polymers. The polypeptide is Caffeoyl-CoA O-methyltransferase 2 (CCOAOMT2) (Eucalyptus globulus (Tasmanian blue gum)).